Consider the following 208-residue polypeptide: Orotidine 5'-phosphate decarboxylase (208 aa).

Residues Asp7, Lys29, 57–66 (DLKLADIPNT), Ser109, 162–172 (PGIGAQGGKAK), Gly185, and Arg186 each bind substrate. Lys59 (proton donor) is an active-site residue.

Belongs to the OMP decarboxylase family. Type 1 subfamily. Homodimer.

It catalyses the reaction orotidine 5'-phosphate + H(+) = UMP + CO2. The protein operates within pyrimidine metabolism; UMP biosynthesis via de novo pathway; UMP from orotate: step 2/2. In terms of biological role, catalyzes the decarboxylation of orotidine 5'-monophosphate (OMP) to uridine 5'-monophosphate (UMP). This Pyrococcus abyssi (strain GE5 / Orsay) protein is Orotidine 5'-phosphate decarboxylase.